The following is a 586-amino-acid chain: Glutathione hydrolase 5 proenzyme (586 aa).

At 1 to 8 the chain is on the cytoplasmic side; it reads MARGYGAT. The chain crosses the membrane as a helical; Signal-anchor for type II membrane protein span at residues 9-29; it reads VSLVLLGLGLALAVIVLAVVL. The Extracellular segment spans residues 30–586; that stretch reads SRHQAPCGPQ…LRKSGEAAGY (557 aa). Asn-98 is a glycosylation site (N-linked (GlcNAc...) asparagine). An L-glutamate-binding site is contributed by Arg-110. Asn-204, Asn-303, and Asn-347 each carry an N-linked (GlcNAc...) asparagine glycan. The active-site Nucleophile is Thr-388. L-glutamate-binding positions include Thr-406, Glu-427, and 469-470; that span reads SS. Residues Asn-535 and Asn-550 are each glycosylated (N-linked (GlcNAc...) asparagine).

This sequence belongs to the gamma-glutamyltransferase family. Heterodimer composed of the light and heavy chains. The active site is located in the light chain. In terms of processing, cleaved by autocatalysis into a large and a small subunit. Post-translationally, glycosylated. As to expression, expressed in follicular dendritic cells in lymphoid follicles (at protein level).

It localises to the membrane. It carries out the reaction glutathione + H2O = L-cysteinylglycine + L-glutamate. The catalysed reaction is an S-substituted glutathione + H2O = an S-substituted L-cysteinylglycine + L-glutamate. The enzyme catalyses leukotriene C4 + H2O = leukotriene D4 + L-glutamate. It catalyses the reaction S-[(2E,6E,10E)-geranylgeranyl]-L-glutathione + H2O = S-[(2E,6E,10E)-geranylgeranyl]-L-cysteinylglycine + L-glutamate. It carries out the reaction an N-terminal (5-L-glutamyl)-[peptide] + an alpha-amino acid = 5-L-glutamyl amino acid + an N-terminal L-alpha-aminoacyl-[peptide]. It participates in sulfur metabolism; glutathione metabolism. The protein operates within lipid metabolism; leukotriene D4 biosynthesis. With respect to regulation, inhibited by serine-borate. Functionally, cleaves the gamma-glutamyl bond of extracellular glutathione tripeptide (gamma-Glu-Cys-Gly) and certain glutathione conjugates. Hydrolyzes glutathione releasing L-Glu and Cys-Gly dipeptide which is further metabolized to maintain extracellular cysteine levels but also to provide cysteine necessary for intracellular glutathione synthesis. Among glutathione-S-conjugates metabolizes leukotriene C4 (LTC4) and S-geranylgeranyl-glutathione (GGG), but is inactive toward gamma-glutamyl leucine. Converts extracellular LTC4 to LTD4 during acute inflammatory response. Acts as a negative regulator of GGG bioactivity. GGT5 (via GGG catabolism) and ABCC1 (via extracellular transport) establish GGG gradients within lymphoid tissues to position P2RY8-positive lymphocytes at germinal centers in lymphoid follicles and restrict their chemotactic transmigration from blood vessels to bone marrow parenchyma. The transpeptidation reaction, i.e. the transfer of gamma-glutamyl moiety to an acceptor molecule to yield a new gamma-glutamyl compound requires high concentration of dipeptide acceptor and is considered nonphysiological. The polypeptide is Glutathione hydrolase 5 proenzyme (GGT5) (Homo sapiens (Human)).